A 334-amino-acid chain; its full sequence is Tryptophan--tRNA ligase (334 aa).

ATP-binding positions include 11–13 (QPT) and 19–20 (GN). Positions 12–20 (PTGKLTIGN) match the 'HIGH' region motif. Asp-135 serves as a coordination point for L-tryptophan. ATP is bound by residues 147–149 (GED), Ile-186, and 195–199 (KMSKS). The short motif at 195–199 (KMSKS) is the 'KMSKS' region element.

This sequence belongs to the class-I aminoacyl-tRNA synthetase family. Homodimer.

The protein localises to the cytoplasm. The enzyme catalyses tRNA(Trp) + L-tryptophan + ATP = L-tryptophyl-tRNA(Trp) + AMP + diphosphate + H(+). Catalyzes the attachment of tryptophan to tRNA(Trp). The protein is Tryptophan--tRNA ligase of Blochmanniella floridana.